Consider the following 365-residue polypeptide: uncharacterized protein (365 aa).

Topologically, residues 1 to 133 (MVLAKQWVLK…RKLDKNKVGK (133 aa)) are cytoplasmic. Residues 134 to 154 (LWWYLSVLGGTSLTAYFIFFT) traverse the membrane as a helical segment. Residues 155 to 169 (YAQLQEREEDYGKVY) are Extracellular-facing. The chain crosses the membrane as a helical span at residues 170–190 (LISGAAGAVGTVCIQLALNVF). Topologically, residues 191-365 (KASKVIAIAG…KLITKVNNEE (175 aa)) are cytoplasmic.

The protein localises to the membrane. This is an uncharacterized protein from Saccharomyces cerevisiae (strain ATCC 204508 / S288c) (Baker's yeast).